Consider the following 126-residue polypeptide: Fluoride-specific ion channel FluC 3 (126 aa).

4 helical membrane-spanning segments follow: residues 7–27 (MWVG…GLSI), 37–57 (LGTF…SILF), 68–87 (LMNT…FSSM), and 101–121 (AIAA…AAFG). Residues glycine 79 and threonine 82 each coordinate Na(+).

This sequence belongs to the fluoride channel Fluc/FEX (TC 1.A.43) family.

It is found in the cell inner membrane. It carries out the reaction fluoride(in) = fluoride(out). Its activity is regulated as follows. Na(+) is not transported, but it plays an essential structural role and its presence is essential for fluoride channel function. Fluoride-specific ion channel. Important for reducing fluoride concentration in the cell, thus reducing its toxicity. This is Fluoride-specific ion channel FluC 3 from Yersinia pestis.